We begin with the raw amino-acid sequence, 170 residues long: Macro domain-containing protein DR_2288 (170 aa).

Residues 1–170 (MPLELVQGDI…HVFERALAQL (170 aa)) enclose the Macro domain.

This sequence belongs to the MacroD-type family.

The chain is Macro domain-containing protein DR_2288 from Deinococcus radiodurans (strain ATCC 13939 / DSM 20539 / JCM 16871 / CCUG 27074 / LMG 4051 / NBRC 15346 / NCIMB 9279 / VKM B-1422 / R1).